A 429-amino-acid chain; its full sequence is Adenylosuccinate synthetase (429 aa).

Residues 12–18 (GDEGKGK) and 40–42 (GHT) each bind GTP. D13 acts as the Proton acceptor in catalysis. Residues D13 and G40 each coordinate Mg(2+). Residues 13–16 (DEGK), 38–41 (NAGH), T128, R142, Q223, T238, and R302 contribute to the IMP site. H41 serves as the catalytic Proton donor. 298 to 304 (TTTGRPR) contributes to the substrate binding site. GTP-binding positions include R304, 330-332 (SID), and 412-414 (SVG).

Belongs to the adenylosuccinate synthetase family. In terms of assembly, homodimer. The cofactor is Mg(2+).

Its subcellular location is the cytoplasm. It catalyses the reaction IMP + L-aspartate + GTP = N(6)-(1,2-dicarboxyethyl)-AMP + GDP + phosphate + 2 H(+). It functions in the pathway purine metabolism; AMP biosynthesis via de novo pathway; AMP from IMP: step 1/2. Plays an important role in the de novo pathway of purine nucleotide biosynthesis. Catalyzes the first committed step in the biosynthesis of AMP from IMP. The sequence is that of Adenylosuccinate synthetase from Bacillus cereus (strain ATCC 14579 / DSM 31 / CCUG 7414 / JCM 2152 / NBRC 15305 / NCIMB 9373 / NCTC 2599 / NRRL B-3711).